The sequence spans 215 residues: Riboflavin synthase (215 aa).

Lumazine-binding repeat units lie at residues Met1–His96 and Ile97–Leu193. Residues Gly4–Ile6, Cys47–Thr49, Asp61–Thr66, Gly100–Ile102, Lys135, Ser144–Thr146, and Ser158–Thr163 each bind 2,4-dihydroxypteridine.

In terms of assembly, homotrimer.

The catalysed reaction is 2 6,7-dimethyl-8-(1-D-ribityl)lumazine + H(+) = 5-amino-6-(D-ribitylamino)uracil + riboflavin. It participates in cofactor biosynthesis; riboflavin biosynthesis; riboflavin from 2-hydroxy-3-oxobutyl phosphate and 5-amino-6-(D-ribitylamino)uracil: step 2/2. Functionally, catalyzes the dismutation of two molecules of 6,7-dimethyl-8-ribityllumazine, resulting in the formation of riboflavin and 5-amino-6-(D-ribitylamino)uracil. This is Riboflavin synthase (ribE) from Actinobacillus pleuropneumoniae (Haemophilus pleuropneumoniae).